A 525-amino-acid polypeptide reads, in one-letter code: uncharacterized protein (525 aa).

The signal sequence occupies residues 1–21 (MLECLSALLVLFAGGGGSVLA). The Extracellular segment spans residues 22–448 (AVQSKTVADP…ISAASQLDKR (427 aa)). A disordered region spans residues 242-264 (KVSSENCSKDTDDKSGSKKERNT). Residues 449 to 469 (IFIFTAITVSITTLMMLGFSY) traverse the membrane as a helical segment. At 470-525 (RSRVSFRDHSIDDSDDDNDWSDDEVEFDEEYFYSLPVSIPEKGISLDKMAQQLGVE) the chain is on the cytoplasmic side.

The protein localises to the membrane. This is an uncharacterized protein from Saccharomyces cerevisiae (strain ATCC 204508 / S288c) (Baker's yeast).